Consider the following 273-residue polypeptide: Epithelial sodium channel subunit beta (273 aa).

Over 1-245 (NCYIFNWGQE…RSISESPTTN (245 aa)) the chain is Extracellular. 5 disulfide bridges follow: Cys92–Cys179, Cys117–Cys175, Cys121–Cys171, Cys130–Cys157, and Cys132–Cys146. Residues 246–273 (VVWLLSNLGGQFGFWMGGSVLCIIEFGE) traverse the membrane as a helical segment.

This sequence belongs to the amiloride-sensitive sodium channel (TC 1.A.6) family. SCNN1B subfamily. In terms of assembly, component of the heterotrimeric epithelial sodium channel (ENaC) composed of an alpha/SCNN1A, a beta/SCNN1B and a gamma/SCNN1G subunit.

It localises to the apical cell membrane. It is found in the cytoplasmic vesicle membrane. The enzyme catalyses Na(+)(in) = Na(+)(out). Its activity is regulated as follows. Originally identified and characterized by its inhibition by the diuretic drug amiloride. Functionally, this is one of the three pore-forming subunits of the heterotrimeric epithelial sodium channel (ENaC), a critical regulator of sodium balance and fluid homeostasis. ENaC operates in epithelial tissues, where it mediates the electrodiffusion of sodium ions from extracellular fluid through the apical membrane of cells, with water following osmotically. It plays a key role in maintaining sodium homeostasis through electrogenic sodium reabsorption in the kidneys. Additionally, ENaC is essential for airway surface liquid homeostasis, which is crucial for proper mucus clearance. This Aquarana catesbeiana (American bullfrog) protein is Epithelial sodium channel subunit beta.